We begin with the raw amino-acid sequence, 208 residues long: N-(5'-phosphoribosyl)anthranilate isomerase (208 aa).

The protein belongs to the TrpF family.

It carries out the reaction N-(5-phospho-beta-D-ribosyl)anthranilate = 1-(2-carboxyphenylamino)-1-deoxy-D-ribulose 5-phosphate. It participates in amino-acid biosynthesis; L-tryptophan biosynthesis; L-tryptophan from chorismate: step 3/5. In Nitrosomonas eutropha (strain DSM 101675 / C91 / Nm57), this protein is N-(5'-phosphoribosyl)anthranilate isomerase.